Here is a 104-residue protein sequence, read N- to C-terminus: Large ribosomal subunit protein uL24 (104 aa).

Belongs to the universal ribosomal protein uL24 family. Part of the 50S ribosomal subunit.

Its function is as follows. One of two assembly initiator proteins, it binds directly to the 5'-end of the 23S rRNA, where it nucleates assembly of the 50S subunit. Functionally, one of the proteins that surrounds the polypeptide exit tunnel on the outside of the subunit. The chain is Large ribosomal subunit protein uL24 from Shigella flexneri.